A 624-amino-acid chain; its full sequence is Phosphatidylserine decarboxylase proenzyme 2 (624 aa).

Residues 1–30 (MGHSPSRHNACGGGGGDGESPPSPLPSRFE) are disordered. Positions 16-129 (GDGESPPSPL…KDLDEHSEVL (114 aa)) constitute a C2 domain. 2 EF-hand domains span residues 156 to 191 (TEQS…FGNK) and 192 to 227 (LAVA…QQEK). Residues D169, N171, D173, E175, E180, D205, N207, D209, and E216 each contribute to the Ca(2+) site. Residues D425, H481, and S569 each act as charge relay system; for autoendoproteolytic cleavage activity in the active site. S569 serves as the catalytic Schiff-base intermediate with substrate; via pyruvic acid; for decarboxylase activity. Pyruvic acid (Ser); by autocatalysis is present on S569.

This sequence belongs to the phosphatidylserine decarboxylase family. PSD-B subfamily. Eukaryotic type II sub-subfamily. In terms of assembly, heterodimer of a large membrane-associated beta subunit and a small pyruvoyl-containing alpha subunit. It depends on pyruvate as a cofactor. Is synthesized initially as an inactive proenzyme. Formation of the active enzyme involves a self-maturation process in which the active site pyruvoyl group is generated from an internal serine residue via an autocatalytic post-translational modification. Two non-identical subunits are generated from the proenzyme in this reaction, and the pyruvate is formed at the N-terminus of the alpha chain, which is derived from the carboxyl end of the proenzyme. The autoendoproteolytic cleavage occurs by a canonical serine protease mechanism, in which the side chain hydroxyl group of the serine supplies its oxygen atom to form the C-terminus of the beta chain, while the remainder of the serine residue undergoes an oxidative deamination to produce ammonia and the pyruvoyl prosthetic group on the alpha chain. During this reaction, the Ser that is part of the protease active site of the proenzyme becomes the pyruvoyl prosthetic group, which constitutes an essential element of the active site of the mature decarboxylase.

The protein localises to the vacuole membrane. It localises to the endoplasmic reticulum membrane. It catalyses the reaction a 1,2-diacyl-sn-glycero-3-phospho-L-serine + H(+) = a 1,2-diacyl-sn-glycero-3-phosphoethanolamine + CO2. Its pathway is phospholipid metabolism; phosphatidylethanolamine biosynthesis; phosphatidylethanolamine from CDP-diacylglycerol: step 2/2. In terms of biological role, catalyzes the formation of phosphatidylethanolamine (PtdEtn) from phosphatidylserine (PtdSer). Plays a central role in phospholipid metabolism and in the interorganelle trafficking of phosphatidylserine. The protein is Phosphatidylserine decarboxylase proenzyme 2 of Oryza sativa subsp. japonica (Rice).